Consider the following 203-residue polypeptide: VPS4-associated protein 1 (203 aa).

Over residues 99–109 (EKETNNSKDPD) the composition is skewed to basic and acidic residues. 2 disordered regions span residues 99 to 125 (EKET…AKND) and 171 to 193 (QVNR…EELL). Low complexity predominate over residues 110–120 (PTTTDSTDTSP). Residues 121–157 (QAKNDAEILSETKKQYSKILDKVTELQRKNRKYELAK) adopt a coiled-coil conformation. Positions 171–182 (QVNRERYLKEQE) are enriched in basic and acidic residues.

Interacts with VPS4.

It is found in the cytoplasm. Its subcellular location is the endosome. Functionally, VPS4-associated protein involved in trafficking to the vacuole. The protein is VPS4-associated protein 1 (VFA1) of Saccharomyces cerevisiae (strain ATCC 204508 / S288c) (Baker's yeast).